Consider the following 208-residue polypeptide: Small ribosomal subunit protein uS4 (208 aa).

An S4 RNA-binding domain is found at 98 to 161 (RRLDNVIYRL…RKMPVIAEAQ (64 aa)).

Belongs to the universal ribosomal protein uS4 family. In terms of assembly, part of the 30S ribosomal subunit. Contacts protein S5. The interaction surface between S4 and S5 is involved in control of translational fidelity.

Functionally, one of the primary rRNA binding proteins, it binds directly to 16S rRNA where it nucleates assembly of the body of the 30S subunit. With S5 and S12 plays an important role in translational accuracy. This chain is Small ribosomal subunit protein uS4, found in Oleidesulfovibrio alaskensis (strain ATCC BAA-1058 / DSM 17464 / G20) (Desulfovibrio alaskensis).